Reading from the N-terminus, the 409-residue chain is Putative fatty acyl-CoA reductase 7 (409 aa).

The protein belongs to the fatty acyl-CoA reductase family.

This chain is Putative fatty acyl-CoA reductase 7 (FAR7), found in Arabidopsis thaliana (Mouse-ear cress).